A 444-amino-acid chain; its full sequence is NEDD8-activating enzyme E1 catalytic subunit (444 aa).

Residue Gly54–Thr78 coordinates ATP. Catalysis depends on Cys205, which acts as the Glycyl thioester intermediate.

Belongs to the ubiquitin-activating E1 family. UBA3 subfamily. In terms of assembly, heterodimer of uba3 and ula1. Interacts with NEDD8 and ubc12. Interacts with but1 and but2.

It carries out the reaction ATP + [NEDD8 protein] + [E1 NEDD8-activating enzyme]-L-cysteine = AMP + diphosphate + [E1 NEDD8-activating enzyme]-S-[NEDD8 protein]-yl-L-cysteine.. The protein operates within protein modification; protein neddylation. Catalytic subunit of the dimeric uba3-ula1 E1 enzyme. E1 activates NEDD8/ubl1 by first adenylating its C-terminal glycine residue with ATP, thereafter linking this residue to the side chain of the catalytic cysteine, yielding a NEDD8-uba3 thioester and free AMP. E1 finally transfers NEDD8 to the catalytic cysteine of ubc12. The polypeptide is NEDD8-activating enzyme E1 catalytic subunit (uba3) (Schizosaccharomyces pombe (strain 972 / ATCC 24843) (Fission yeast)).